Consider the following 316-residue polypeptide: Transaldolase (316 aa).

Lys132 acts as the Schiff-base intermediate with substrate in catalysis.

The protein belongs to the transaldolase family. Type 1 subfamily. In terms of assembly, homodimer.

The protein resides in the cytoplasm. The enzyme catalyses D-sedoheptulose 7-phosphate + D-glyceraldehyde 3-phosphate = D-erythrose 4-phosphate + beta-D-fructose 6-phosphate. It functions in the pathway carbohydrate degradation; pentose phosphate pathway; D-glyceraldehyde 3-phosphate and beta-D-fructose 6-phosphate from D-ribose 5-phosphate and D-xylulose 5-phosphate (non-oxidative stage): step 2/3. In terms of biological role, transaldolase is important for the balance of metabolites in the pentose-phosphate pathway. The protein is Transaldolase of Aeromonas salmonicida (strain A449).